The following is a 273-amino-acid chain: Cell division protein ZipA (273 aa).

Methionine 1 is a topological domain (periplasmic). Residues 2 to 22 traverse the membrane as a helical segment; sequence EFGLREWLIVIGIIVIAGILF. Residues 23–273 lie on the Cytoplasmic side of the membrane; that stretch reads DGWRRMRGGK…FERRQLTQKR (251 aa). The interval 65–125 is disordered; the sequence is EMEPQLDEDD…QEPKKSAKLS (61 aa). The span at 111-120 shows a compositional bias: basic and acidic residues; that stretch reads VDDKPQEPKK.

Belongs to the ZipA family. Interacts with FtsZ via their C-terminal domains.

Its subcellular location is the cell inner membrane. In terms of biological role, essential cell division protein that stabilizes the FtsZ protofilaments by cross-linking them and that serves as a cytoplasmic membrane anchor for the Z ring. Also required for the recruitment to the septal ring of downstream cell division proteins. This Ectopseudomonas mendocina (strain ymp) (Pseudomonas mendocina) protein is Cell division protein ZipA.